Here is a 943-residue protein sequence, read N- to C-terminus: Isoleucine--tRNA ligase (943 aa).

Residues 58 to 68 (PYANGNIHIGH) carry the 'HIGH' region motif. L-isoleucyl-5'-AMP is bound at residue Glu567. A 'KMSKS' region motif is present at residues 608–612 (KMSKS). Position 611 (Lys611) interacts with ATP. The Zn(2+) site is built by Cys906, Cys909, Cys926, and Cys929.

The protein belongs to the class-I aminoacyl-tRNA synthetase family. IleS type 1 subfamily. As to quaternary structure, monomer. The cofactor is Zn(2+).

Its subcellular location is the cytoplasm. It carries out the reaction tRNA(Ile) + L-isoleucine + ATP = L-isoleucyl-tRNA(Ile) + AMP + diphosphate. In terms of biological role, catalyzes the attachment of isoleucine to tRNA(Ile). As IleRS can inadvertently accommodate and process structurally similar amino acids such as valine, to avoid such errors it has two additional distinct tRNA(Ile)-dependent editing activities. One activity is designated as 'pretransfer' editing and involves the hydrolysis of activated Val-AMP. The other activity is designated 'posttransfer' editing and involves deacylation of mischarged Val-tRNA(Ile). This Pseudomonas savastanoi pv. phaseolicola (strain 1448A / Race 6) (Pseudomonas syringae pv. phaseolicola (strain 1448A / Race 6)) protein is Isoleucine--tRNA ligase.